The primary structure comprises 292 residues: ATP synthase gamma chain (292 aa).

It belongs to the ATPase gamma chain family. F-type ATPases have 2 components, CF(1) - the catalytic core - and CF(0) - the membrane proton channel. CF(1) has five subunits: alpha(3), beta(3), gamma(1), delta(1), epsilon(1). CF(0) has three main subunits: a, b and c.

The protein resides in the cell inner membrane. Its function is as follows. Produces ATP from ADP in the presence of a proton gradient across the membrane. The gamma chain is believed to be important in regulating ATPase activity and the flow of protons through the CF(0) complex. The polypeptide is ATP synthase gamma chain (Hyphomonas neptunium (strain ATCC 15444)).